A 485-amino-acid polypeptide reads, in one-letter code: NADH-quinone oxidoreductase subunit N (485 aa).

The next 14 helical transmembrane spans lie at 8 to 28, 35 to 55, 71 to 91, 105 to 125, 127 to 147, 159 to 179, 203 to 223, 235 to 255, 271 to 291, 297 to 317, 326 to 346, 373 to 393, 408 to 430, and 455 to 475; these read LIAL…MLSI, FLNA…LWFV, GFAM…CTFA, FYLL…ANHL, ALFL…GYAF, YTIL…LVYA, LLAG…LVPF, PAPV…GVVM, IVLG…ALSQ, LLGY…IALQ, VGVY…VVSL, AAVM…LGFI, WWLV…RVAV, and IVVL…QPLI.

The protein belongs to the complex I subunit 2 family. In terms of assembly, NDH-1 is composed of 13 different subunits. Subunits NuoA, H, J, K, L, M, N constitute the membrane sector of the complex.

The protein resides in the cell inner membrane. It catalyses the reaction a quinone + NADH + 5 H(+)(in) = a quinol + NAD(+) + 4 H(+)(out). In terms of biological role, NDH-1 shuttles electrons from NADH, via FMN and iron-sulfur (Fe-S) centers, to quinones in the respiratory chain. The immediate electron acceptor for the enzyme in this species is believed to be ubiquinone. Couples the redox reaction to proton translocation (for every two electrons transferred, four hydrogen ions are translocated across the cytoplasmic membrane), and thus conserves the redox energy in a proton gradient. The sequence is that of NADH-quinone oxidoreductase subunit N from Citrobacter koseri (strain ATCC BAA-895 / CDC 4225-83 / SGSC4696).